A 226-amino-acid polypeptide reads, in one-letter code: Cytochrome c-553I (226 aa).

A signal peptide spans 1–22 (MTSKTTASLLAICVACAASAIA). Residues 43–68 (AAVSGDAHEQPAAEAPAEEEEETPAV) are disordered. Heme is bound by residues Cys-125, Cys-128, His-129, and Met-173. The interval 203 to 226 (RGRPAKREDKSDEFVAQEDSCMSG) is disordered.

In terms of processing, binds 1 heme group per subunit.

It localises to the periplasm. The chain is Cytochrome c-553I (cycB) from Paracoccus denitrificans.